The sequence spans 340 residues: Guanine nucleotide-binding protein G(I)/G(S)/G(T) subunit beta-3 (340 aa).

WD repeat units lie at residues 53–83 (GHLA…IVWD), 95–125 (LRSS…SIYS), 141–170 (AHTG…ALWD), 182–212 (GHTG…KLWD), 224–254 (GHES…RLFD), 268–298 (SIIC…NIWD), and 310–340 (GHDN…KVWN).

Belongs to the WD repeat G protein beta family. G proteins are composed of 3 units, alpha, beta and gamma. Interacts with RASD2.

The protein resides in the cytoplasm. It is found in the perinuclear region. In terms of biological role, guanine nucleotide-binding proteins (G proteins) are involved as a modulator or transducer in various transmembrane signaling systems. The beta and gamma chains are required for the GTPase activity, for replacement of GDP by GTP, and for G protein-effector interaction. In Canis lupus familiaris (Dog), this protein is Guanine nucleotide-binding protein G(I)/G(S)/G(T) subunit beta-3 (GNB3).